Consider the following 718-residue polypeptide: Sodium/myo-inositol cotransporter (718 aa).

Residues 1-9 (MRAVLETAD) lie on the Extracellular side of the membrane. The helical transmembrane segment at 10-29 (IAIVALYFILVMCIGFFAMW) threads the bilayer. The Cytoplasmic portion of the chain corresponds to 30–38 (KSNRSTVSG). A helical membrane pass occupies residues 39 to 57 (YFLAGRSMTWVAIGASLFV). The Extracellular segment spans residues 58–86 (SNIGSEHFIGLAGSGAASGFAVGAWEFNA). A helical transmembrane segment spans residues 87 to 110 (LLLLQLLGWVFIPIYIRSGVYTMP). Topologically, residues 111-123 (EYLSKRFGGHRIQ) are cytoplasmic. The chain crosses the membrane as a helical span at residues 124-144 (VYFAALSLILYIFTKLSVDLY). The Extracellular segment spans residues 145–157 (SGALFIQESMGWN). The chain crosses the membrane as a helical span at residues 158–183 (LYVSVILLIGMTALLTVTGGLVAVIY). The Cytoplasmic segment spans residues 184-186 (TDT). A helical transmembrane segment spans residues 187-205 (LQALLMIVGALTLMVISMM). The Extracellular segment spans residues 206 to 303 (EIGGFEEVKR…HAKGSTLMAG (98 aa)). N-linked (GlcNAc...) asparagine glycosylation occurs at N232. A helical transmembrane segment spans residues 304-324 (FLKLLPMFIIVVPGMISRILF). Residues 325–353 (ADDIACINPEHCMQVCGSRAGCSNIAYPR) lie on the Cytoplasmic side of the membrane. A helical membrane pass occupies residues 354 to 376 (LVMKLVPVGLRGLMMAVMIAALM). The Extracellular portion of the chain corresponds to 377–406 (SDLDSIFNSASTIFTLDVYKLIRKSASSRE). Residues 407-430 (LMIVGRIFVAFMVVISIAWVPIIV) form a helical membrane-spanning segment. Residues 431–443 (EMQGGQMYLYIQE) are Cytoplasmic-facing. Residues 444-462 (VADYLTPPVAALFLLAIFW) form a helical membrane-spanning segment. Topologically, residues 463–510 (KRCNEQGAFYGGMAGFILVVVRLTLAFAYRAPECDQPDNRPVFIKDIH) are extracellular. A helical membrane pass occupies residues 511–532 (YMYVATALFWITGLITVIVSLL). Topologically, residues 533 to 695 (TPPPTKEQIR…QMLEEPPQVK (163 aa)) are cytoplasmic. Residues S594 and S632 each carry the phosphoserine modification. Residues 696–716 (VILNIGLFGVCSLGIFMFVYF) traverse the membrane as a helical segment. Residues 717–718 (SL) are Extracellular-facing.

It belongs to the sodium:solute symporter (SSF) (TC 2.A.21) family. As to quaternary structure, interacts with KCNQ2 (via the pore module). Interacts with KCNQ1; this interaction is direct. Forms coregulatory complexes with ion channels KCNQ2-KCNQ3 and KCNQ1-KCNE2.

The protein localises to the apical cell membrane. The protein resides in the basolateral cell membrane. Electrogenic Na(+)-coupled sugar symporter that actively transports myo-inositol and its stereoisomer scyllo-inositol across the plasma membrane, with a Na(+) to sugar coupling ratio of 2:1. Maintains myo-inositol concentration gradient that defines cell volume and fluid balance during osmotic stress, in particular in the fetoplacental unit and central nervous system. Forms coregulatory complexes with voltage-gated K(+) ion channels, allosterically altering ion selectivity, voltage dependence and gating kinetics of the channel. In turn, K(+) efflux through the channel forms a local electrical gradient that modulates electrogenic Na(+)-coupled myo-inositol influx through the transporter. Associates with KCNQ1-KCNE2 channel in the apical membrane of choroid plexus epithelium and regulates the myo-inositol gradient between blood and cerebrospinal fluid with an impact on neuron excitability. Associates with KCNQ2-KCNQ3 channel altering ion selectivity, increasing Na(+) and Cs(+) permeation relative to K(+) permeation. Provides myo-inositol precursor for biosynthesis of phosphoinositides such as PI(4,5)P2, thus indirectly affecting the activity of phosphoinositide-dependent ion channels and Ca(2+) signaling upon osmotic stress. The polypeptide is Sodium/myo-inositol cotransporter (SLC5A3) (Bos taurus (Bovine)).